Here is a 672-residue protein sequence, read N- to C-terminus: Zinc finger and BTB domain-containing protein 24 (672 aa).

Residues 39-105 (CDITLIVEDV…MYSAVVLVDE (67 aa)) form the BTB domain. The interval 136 to 208 (HMQVKRKRGR…GKRKIKQPIR (73 aa)) is disordered. A DNA-binding region (a.T hook 1) is located at residues 140 to 152 (KRKRGRPKKNQDL). Residues 148–158 (KNQDLSQKENP) are compositionally biased toward basic and acidic residues. A compositionally biased stretch (polar residues) spans 160 to 171 (SELQAQTSSEIQ). Residues 198–208 (EGKRKIKQPIR) show a composition bias toward basic residues. The segment at residues 223–235 (PGKRGRRRKYPDT) is a DNA-binding region (a.T hook 2). 8 C2H2-type zinc fingers span residues 237–259 (ARCEECGKVFKSHLFLKIHQRTH), 265–287 (FRCSVCGKEFTQKHTLLVHQRMH), 293–315 (YICTVCSKALSTKHSLLEHMNLH), 321–343 (FTCEECGKSFSQQRQLKSHNRVH), 349–371 (PECAECHHKFMDAAQLKKHLRTH), 377–399 (FTCEICGKCFTAKSTLQTHIRIH), 405–427 (YVCKVCDKTFSDPSARRRHEVSH), and 433–455 (FSCSICKVSFARKDNLKAHIKTH). The interval 453 to 492 (KTHNKENPPAQAESTDKPPQSAPEQQEQEQQQQQQTSGDK) is disordered. A compositionally biased stretch (low complexity) spans 476–487 (EQQEQEQQQQQQ).

It belongs to the krueppel C2H2-type zinc-finger protein family.

Its subcellular location is the nucleus. May be involved in BMP2-induced transcription. This Danio rerio (Zebrafish) protein is Zinc finger and BTB domain-containing protein 24 (zbtb24).